The chain runs to 142 residues: Putative regulator of rDNA transcription protein 16 (142 aa).

The next 3 membrane-spanning stretches (helical) occupy residues 19-39 (ILLTVLFGIGWATLDLPVMVA), 84-104 (FLLFIGLNTSPCVSETIAIFL), and 111-131 (SIFIATEYLFLILLPLRGLCH).

Its subcellular location is the membrane. Functionally, identified in a screen for mutants with decreased levels of rDNA transcription. The chain is Putative regulator of rDNA transcription protein 16 (RRT16) from Saccharomyces cerevisiae (strain ATCC 204508 / S288c) (Baker's yeast).